Here is a 256-residue protein sequence, read N- to C-terminus: MLRIADKTFDSHLVTGTGKFASSQLMVEAIRASGSQLVTLAMKRVDLRQHNDAILEPLIAAGVTLLPNTSGAKTAEEAIFAAHLAREALGTNWLKLEIHPDARWLLPDPIETLKAAETLVQQGFVVLPYCGADPVLCKRLEEVGCAAVMPLGAPIGSNQGLETRAMLEIIIQQATVPVVVDAGIGVPSHAAQALEMGTDAVLVNTAIAVADDPVNMAKAFRLAVEAGLLARQSGPGSRSYFAHATSPLTGFLEASV.

Lysine 95 (schiff-base intermediate with DXP) is an active-site residue. Residues glycine 156, 182 to 183 (AG), and 204 to 205 (NT) each bind 1-deoxy-D-xylulose 5-phosphate.

This sequence belongs to the ThiG family. Homotetramer. Forms heterodimers with either ThiH or ThiS.

It is found in the cytoplasm. It catalyses the reaction [ThiS sulfur-carrier protein]-C-terminal-Gly-aminoethanethioate + 2-iminoacetate + 1-deoxy-D-xylulose 5-phosphate = [ThiS sulfur-carrier protein]-C-terminal Gly-Gly + 2-[(2R,5Z)-2-carboxy-4-methylthiazol-5(2H)-ylidene]ethyl phosphate + 2 H2O + H(+). It functions in the pathway cofactor biosynthesis; thiamine diphosphate biosynthesis. Catalyzes the rearrangement of 1-deoxy-D-xylulose 5-phosphate (DXP) to produce the thiazole phosphate moiety of thiamine. Sulfur is provided by the thiocarboxylate moiety of the carrier protein ThiS. In vitro, sulfur can be provided by H(2)S. The sequence is that of Thiazole synthase from Shigella dysenteriae serotype 1 (strain Sd197).